A 475-amino-acid polypeptide reads, in one-letter code: MSDIEQERWSRVKGRLRSTVGEDIYSSWFARMDLESVHGESVRMSVPTRFLKSWIQAHYAERVLACWQAELPDVHRIDLMVRSAMRCAAPAKEAPAADPRRPEHGDGRASTELKMVATAPASANHDALGGSPLDPRLTFASFVTGRSNTLAHAAARQVAEGRRGDSIMFNPLYIHAGVGLGKTHLLQAVTWAGNAGTERKVLYLTAEKFMYGFVAALKSQTALAFKEALRGIDVLVIDDLQFLQGKSTQAEFCHTLNALIDAGRQVVVAADRPPSDLESLDDRVRSRLAGGLVVEMGSLGEELRLGILKSRIEVARAHHASFSVPEPVLDYLAKAITHNGRDLEGAINRLLAHSKLNAQPVTLEMAEREVRDLIRPQEPRRIKIEDIQRVVARQYNVSRSDLLSSRRTANVVRPRQVAMYLAKTLTLRSLPEIGRRFGGRDHTTVLHAVRKIEALVSKDTTLSDEVELLKRQLQE.

The domain I, interacts with DnaA modulators stretch occupies residues 1–73; sequence MSDIEQERWS…LACWQAELPD (73 aa). A domain II region spans residues 73-131; the sequence is DVHRIDLMVRSAMRCAAPAKEAPAADPRRPEHGDGRASTELKMVATAPASANHDALGGS. A domain III, AAA+ region region spans residues 132 to 354; sequence PLDPRLTFAS…GAINRLLAHS (223 aa). Residues Gly-179, Gly-181, Lys-182, and Thr-183 each contribute to the ATP site. The domain IV, binds dsDNA stretch occupies residues 355–475; it reads KLNAQPVTLE…VELLKRQLQE (121 aa).

It belongs to the DnaA family. As to quaternary structure, oligomerizes as a right-handed, spiral filament on DNA at oriC.

The protein resides in the cytoplasm. Its function is as follows. Plays an essential role in the initiation and regulation of chromosomal replication. ATP-DnaA binds to the origin of replication (oriC) to initiate formation of the DNA replication initiation complex once per cell cycle. Binds the DnaA box (a 9 base pair repeat at the origin) and separates the double-stranded (ds)DNA. Forms a right-handed helical filament on oriC DNA; dsDNA binds to the exterior of the filament while single-stranded (ss)DNA is stabiized in the filament's interior. The ATP-DnaA-oriC complex binds and stabilizes one strand of the AT-rich DNA unwinding element (DUE), permitting loading of DNA polymerase. After initiation quickly degrades to an ADP-DnaA complex that is not apt for DNA replication. Binds acidic phospholipids. The chain is Chromosomal replication initiator protein DnaA from Nitrobacter hamburgensis (strain DSM 10229 / NCIMB 13809 / X14).